A 441-amino-acid polypeptide reads, in one-letter code: Mitochondrial distribution and morphology protein 12 (441 aa).

Residues 1 to 441 (MSIDIDWERA…VYPSFWTFLV (441 aa)) form the SMP-LTD domain. Disordered stretches follow at residues 68-89 (DFYEDGDEDLSVSSEEQSPMRE) and 183-289 (RAVT…RMRE). 2 stretches are compositionally biased toward polar residues: residues 226–245 (SRPSTANTGNTLLSRGSVST) and 253–263 (PSQTLLANNPG).

The protein belongs to the MDM12 family. As to quaternary structure, component of the ER-mitochondria encounter structure (ERMES) or MDM complex, composed of MMM1, MDM10, MDM12 and MDM34. An MMM1 homodimer associates with one molecule of MDM12 on each side in a pairwise head-to-tail manner, and the SMP-LTD domains of MMM1 and MDM12 generate a continuous hydrophobic tunnel for phospholipid trafficking.

The protein resides in the mitochondrion outer membrane. Its subcellular location is the endoplasmic reticulum membrane. In terms of biological role, component of the ERMES/MDM complex, which serves as a molecular tether to connect the endoplasmic reticulum (ER) and mitochondria. Components of this complex are involved in the control of mitochondrial shape and protein biogenesis, and function in nonvesicular lipid trafficking between the ER and mitochondria. MDM12 is required for the interaction of the ER-resident membrane protein MMM1 and the outer mitochondrial membrane-resident beta-barrel protein MDM10. The MDM12-MMM1 subcomplex functions in the major beta-barrel assembly pathway that is responsible for biogenesis of all mitochondrial outer membrane beta-barrel proteins, and acts in a late step after the SAM complex. The MDM10-MDM12-MMM1 subcomplex further acts in the TOM40-specific pathway after the action of the MDM12-MMM1 complex. Essential for establishing and maintaining the structure of mitochondria and maintenance of mtDNA nucleoids. This chain is Mitochondrial distribution and morphology protein 12, found in Paracoccidioides lutzii (strain ATCC MYA-826 / Pb01) (Paracoccidioides brasiliensis).